A 508-amino-acid chain; its full sequence is Maturase K (508 aa).

The protein belongs to the intron maturase 2 family. MatK subfamily.

It is found in the plastid. It localises to the chloroplast. Its function is as follows. Usually encoded in the trnK tRNA gene intron. Probably assists in splicing its own and other chloroplast group II introns. This is Maturase K from Pelargonium hortorum (Common geranium).